A 122-amino-acid chain; its full sequence is Large ribosomal subunit protein bL12 (122 aa).

The protein belongs to the bacterial ribosomal protein bL12 family. Homodimer. Part of the ribosomal stalk of the 50S ribosomal subunit. Forms a multimeric L10(L12)X complex, where L10 forms an elongated spine to which 2 to 4 L12 dimers bind in a sequential fashion. Binds GTP-bound translation factors.

In terms of biological role, forms part of the ribosomal stalk which helps the ribosome interact with GTP-bound translation factors. Is thus essential for accurate translation. This Myxococcus xanthus (strain DK1622) protein is Large ribosomal subunit protein bL12.